Reading from the N-terminus, the 356-residue chain is Protein RecA (356 aa).

Gly67–Thr74 contacts ATP.

It belongs to the RecA family.

It localises to the cytoplasm. Can catalyze the hydrolysis of ATP in the presence of single-stranded DNA, the ATP-dependent uptake of single-stranded DNA by duplex DNA, and the ATP-dependent hybridization of homologous single-stranded DNAs. It interacts with LexA causing its activation and leading to its autocatalytic cleavage. The protein is Protein RecA of Yersinia pseudotuberculosis serotype I (strain IP32953).